We begin with the raw amino-acid sequence, 314 residues long: Replication initiation protein (314 aa).

It belongs to the plasmid replication initiation factor family.

In terms of biological role, this protein is probably a specific topoisomerase involved in initiating replication. This protein is specifically required and may be rate-limiting for replication of the plasmid in vivo. The protein is Replication initiation protein (repC) of Staphylococcus aureus.